The primary structure comprises 267 residues: tRNA pseudouridine synthase A (267 aa).

Aspartate 53 functions as the Nucleophile in the catalytic mechanism. Residue tyrosine 114 coordinates substrate.

Belongs to the tRNA pseudouridine synthase TruA family. Homodimer.

It carries out the reaction uridine(38/39/40) in tRNA = pseudouridine(38/39/40) in tRNA. In terms of biological role, formation of pseudouridine at positions 38, 39 and 40 in the anticodon stem and loop of transfer RNAs. In Chlamydia trachomatis serovar A (strain ATCC VR-571B / DSM 19440 / HAR-13), this protein is tRNA pseudouridine synthase A.